A 250-amino-acid chain; its full sequence is 5'/3'-nucleotidase SurE (250 aa).

A divalent metal cation-binding residues include Asp8, Asp9, Ser39, and Asn92.

This sequence belongs to the SurE nucleotidase family. It depends on a divalent metal cation as a cofactor.

The protein localises to the cytoplasm. The catalysed reaction is a ribonucleoside 5'-phosphate + H2O = a ribonucleoside + phosphate. The enzyme catalyses a ribonucleoside 3'-phosphate + H2O = a ribonucleoside + phosphate. It carries out the reaction [phosphate](n) + H2O = [phosphate](n-1) + phosphate + H(+). Its function is as follows. Nucleotidase with a broad substrate specificity as it can dephosphorylate various ribo- and deoxyribonucleoside 5'-monophosphates and ribonucleoside 3'-monophosphates with highest affinity to 3'-AMP. Also hydrolyzes polyphosphate (exopolyphosphatase activity) with the preference for short-chain-length substrates (P20-25). Might be involved in the regulation of dNTP and NTP pools, and in the turnover of 3'-mononucleotides produced by numerous intracellular RNases (T1, T2, and F) during the degradation of various RNAs. This Wigglesworthia glossinidia brevipalpis protein is 5'/3'-nucleotidase SurE.